The chain runs to 434 residues: Pre-mRNA-splicing factor PRP46 (434 aa).

7 WD repeats span residues 120-160, 163-202, 205-244, 247-288, 290-329, 331-369, and 380-419; these read GHTG…LKIT, GHVM…AIRD, GHLS…EIMV, GHKS…KVLT, HSRN…TNFQ, QNTG…KYQS, and ESER…TEDT.

The protein belongs to the WD repeat PRL1/PRL2 family. As to quaternary structure, associated with the spliceosome.

The protein localises to the cytoplasm. The protein resides in the nucleus. Functionally, involved in pre-mRNA splicing and required for cell cycle progression at G2/M. This chain is Pre-mRNA-splicing factor PRP46 (PRP46), found in Kluyveromyces lactis (strain ATCC 8585 / CBS 2359 / DSM 70799 / NBRC 1267 / NRRL Y-1140 / WM37) (Yeast).